The chain runs to 95 residues: Small ribosomal subunit protein bS6 (95 aa).

It belongs to the bacterial ribosomal protein bS6 family.

In terms of biological role, binds together with bS18 to 16S ribosomal RNA. The protein is Small ribosomal subunit protein bS6 of Geobacillus sp. (strain WCH70).